Here is a 208-residue protein sequence, read N- to C-terminus: Cysteine-rich protein 2 (208 aa).

Residues 5–57 (CPKCDKTVYFAEKVSSLGKDWHKFCLKCERCNKTLTPGGHAEHDGKPFCHKPC) form the LIM zinc-binding 1 domain. Lys23 carries the N6-acetyllysine modification. Phosphoserine is present on Ser104. In terms of domain architecture, LIM zinc-binding 2 spans 126 to 178 (CPRCNKRVYFAEKVTSLGKDWHRPCLRCERCSKTLTPGGHAEHDGQPYCHKPC). N6-acetyllysine occurs at positions 138 and 144.

Interacts with TGFB1I1.

The polypeptide is Cysteine-rich protein 2 (Crip2) (Mus musculus (Mouse)).